Reading from the N-terminus, the 191-residue chain is Inosine triphosphate pyrophosphatase (191 aa).

12 to 17 is an ITP binding site; the sequence is TGNANK. E42 is a Mg(2+) binding site. ITP is bound by residues K54, 70-71, K87, 145-148, K168, and 173-174; these read DT, FGWD, and HR.

This sequence belongs to the HAM1 NTPase family. In terms of assembly, homodimer. The cofactor is Mg(2+). Requires Mn(2+) as cofactor.

It is found in the cytoplasm. The catalysed reaction is ITP + H2O = IMP + diphosphate + H(+). It carries out the reaction dITP + H2O = dIMP + diphosphate + H(+). The enzyme catalyses XTP + H2O = XMP + diphosphate + H(+). Its function is as follows. Pyrophosphatase that hydrolyzes non-canonical purine nucleotides such as inosine triphosphate (ITP), deoxyinosine triphosphate (dITP) or xanthosine 5'-triphosphate (XTP) to their respective monophosphate derivatives. The enzyme does not distinguish between the deoxy- and ribose forms. Probably excludes non-canonical purines from RNA and DNA precursor pools, thus preventing their incorporation into RNA and DNA and avoiding chromosomal lesions. The chain is Inosine triphosphate pyrophosphatase from Phytophthora infestans (strain T30-4) (Potato late blight agent).